A 225-amino-acid chain; its full sequence is MARSIIAVLPAAGVGSRMQADKPKQYLTLLGKTLLEHTLDVMLSYPAVSKIILAVSKDDPYISTLSLDPKIQLVEGGTTRAESVLNGLNVIAEKNAWVLVHDAARPCLQHADIDKLLAIEDKQGAILAIPVTDTIKRADNQQCIVKTEDRSQLWQAMTPQFFPVDILRDALSTGIQQGANITDEASAIELAGFRPHLVAGRSDNLKVTRPEDLALAEFYLTRNKL.

It belongs to the IspD/TarI cytidylyltransferase family. IspD subfamily.

The enzyme catalyses 2-C-methyl-D-erythritol 4-phosphate + CTP + H(+) = 4-CDP-2-C-methyl-D-erythritol + diphosphate. Its pathway is isoprenoid biosynthesis; isopentenyl diphosphate biosynthesis via DXP pathway; isopentenyl diphosphate from 1-deoxy-D-xylulose 5-phosphate: step 2/6. Functionally, catalyzes the formation of 4-diphosphocytidyl-2-C-methyl-D-erythritol from CTP and 2-C-methyl-D-erythritol 4-phosphate (MEP). This chain is 2-C-methyl-D-erythritol 4-phosphate cytidylyltransferase, found in Haemophilus influenzae (strain PittEE).